Here is a 231-residue protein sequence, read N- to C-terminus: Putative transglycosylase H16_A0665 (231 aa).

The chain crosses the membrane as a helical span at residues 8-28 (FIKLLVLAVIGGALLAAIAIL).

Belongs to the glycosyltransferase 51 family.

The protein resides in the secreted. Its subcellular location is the membrane. It participates in cell wall biogenesis; peptidoglycan biosynthesis. Cell wall formation. This chain is Putative transglycosylase H16_A0665, found in Cupriavidus necator (strain ATCC 17699 / DSM 428 / KCTC 22496 / NCIMB 10442 / H16 / Stanier 337) (Ralstonia eutropha).